The sequence spans 306 residues: Pantothenate kinase (306 aa).

91–98 lines the ATP pocket; that stretch reads GSVAVGKS.

It belongs to the prokaryotic pantothenate kinase family.

It is found in the cytoplasm. It carries out the reaction (R)-pantothenate + ATP = (R)-4'-phosphopantothenate + ADP + H(+). It functions in the pathway cofactor biosynthesis; coenzyme A biosynthesis; CoA from (R)-pantothenate: step 1/5. In Streptococcus pyogenes serotype M3 (strain ATCC BAA-595 / MGAS315), this protein is Pantothenate kinase (coaA).